The chain runs to 128 residues: Fluoride-specific ion channel FluC (128 aa).

4 consecutive transmembrane segments (helical) span residues 4-24 (LILA…RYLI), 37-57 (PYGT…IMDI), 63-83 (LISG…LTTF), and 99-119 (ILMG…GVII). Na(+)-binding residues include Gly78 and Thr81.

It belongs to the fluoride channel Fluc/FEX (TC 1.A.43) family.

Its subcellular location is the cell membrane. It carries out the reaction fluoride(in) = fluoride(out). With respect to regulation, na(+) is not transported, but it plays an essential structural role and its presence is essential for fluoride channel function. Functionally, fluoride-specific ion channel. Important for reducing fluoride concentration in the cell, thus reducing its toxicity. This Clostridium novyi (strain NT) protein is Fluoride-specific ion channel FluC.